An 825-amino-acid chain; its full sequence is Osmosensitive cation channel TMEM63C (825 aa).

Topologically, residues 1 to 50 (MAFESWPAGGVRPVEELDVRSFLMEENSTAERCYRSHSRSSVLQGLPFGG) are extracellular. Residues 51 to 75 (VPTVLAINVVLWLILLLIFSCLRKA) form a helical membrane-spanning segment. At 76 to 141 (AWDYGRLALL…KDEEIRSKCG (66 aa)) the chain is on the cytoplasmic side. Positions 98 to 117 (EQSEKEKTPSDSSPSDSETK) are disordered. The helical transmembrane segment at 142-174 (IDAVTYLSFQRHIILLMMVVCLLSLTIILPVNL) threads the bilayer. The Extracellular segment spans residues 175 to 198 (SGNLLGDNPENFGRTTVVNVPAQN). A helical transmembrane segment spans residues 199 to 223 (IFLWLHSIFALLYFVITVLCMAHHS). At 224-418 (SRLEYREDEK…IIWENLSVCG (195 aa)) the chain is on the cytoplasmic side. A helical transmembrane segment spans residues 419 to 448 (PRWWLRCILLNILLFLLLFFLTTPAIIVNT). Topologically, residues 449–463 (MDKFNVTRPVESLRN) are extracellular. A helical membrane pass occupies residues 464–493 (PVITQFFPTLLLWAFSILLPFIVYYSSFFE). At 494-497 (YHWT) the chain is on the cytoplasmic side. The helical transmembrane segment at 498 to 534 (RSGENQVTMHKCFLLLVFMVIILPSLGLSSLNLFFRW) threads the bilayer. The Extracellular portion of the chain corresponds to 535 to 557 (LFDVRFLDETDVKFQCVFLPDNG). A helical transmembrane segment spans residues 558 to 590 (AFFVNYVITSSLIGTAMELLRIPALLVYSLRLC). At 591–610 (FAKSKAECIHVKISQAYEFQ) the chain is on the cytoplasmic side. The chain crosses the membrane as a helical span at residues 611–629 (FGLEYAWTMCIFSVSMTYS). Topologically, residues 630 to 632 (ITC) are extracellular. Residues 633 to 657 (PVIVPFGLLYLVLKHMVDRYNIYYA) traverse the membrane as a helical segment. Over 658-664 (YTPTKLN) the chain is Cytoplasmic. Residues 665–693 (QRIHAAAISQVVVAPILCMFWLLFFSVLR) form a helical membrane-spanning segment. At 694 to 698 (LGPVQ) the chain is on the extracellular side. Residues 699-719 (PITLFTFITLLCSIAFSCFGF) traverse the membrane as a helical segment. Residues 720–825 (CMKKLRADRS…LLMDSPVAFQ (106 aa)) lie on the Cytoplasmic side of the membrane. Residues 777-825 (SPAHQSYGTMVNSQSSVRDAEEDEEKDLEETLETELKDDLLMDSPVAFQ) form a disordered region. Residues 779–793 (AHQSYGTMVNSQSSV) are compositionally biased toward polar residues. A compositionally biased stretch (acidic residues) spans 796–809 (AEEDEEKDLEETLE).

It belongs to the CSC1 (TC 1.A.17) family. Monomer.

It localises to the endoplasmic reticulum membrane. Its subcellular location is the cell membrane. It carries out the reaction Ca(2+)(in) = Ca(2+)(out). In terms of biological role, acts as an osmosensitive cation channel preferentially activated upon hypotonic stress. In contrast to tmem63b, does not show phospholipid scramblase activity. Required for the functional integrity of the kidney glomerular filtration barrier. The polypeptide is Osmosensitive cation channel TMEM63C (tmem63c) (Danio rerio (Zebrafish)).